Here is a 612-residue protein sequence, read N- to C-terminus: Adherence factor (612 aa).

Low complexity-rich tracts occupy residues 1–18, 47–68, 94–106, 115–141, 182–203, and 218–228; these read MSSF…NLSS, SSMM…QQQQ, LQTQ…SATT, YNQQ…NNMQ, QSAQ…QPRS, and SRQVSGSGRST. Disordered stretches follow at residues 1–20, 46–68, 94–143, 179–273, 443–480, 497–527, and 546–612; these read MSSF…SSFQ, ASSM…QQQQ, LQTQ…MQFF, PQLQ…NNNK, KEKK…NTNN, SQLM…LSNN, and SQEQ…KQFY. The span at 230–240 shows a compositional bias: polar residues; the sequence is AKKQSAITSGS. Residues 254–272 show a composition bias toward low complexity; it reads TSVANSTSTTTMTTTNNNN. Residues 443–457 are compositionally biased toward basic and acidic residues; it reads KEKKLTEKTIEQREQ. Composition is skewed to polar residues over residues 465-480 and 497-512; these read ANHS…NTNN and SQLM…ATKI. The span at 555–571 shows a compositional bias: basic residues; it reads NQHHHNHQQHPLIHHHQ. Over residues 585–606 the composition is skewed to low complexity; sequence PSTIPTSSLSIQQQQQQQQQQL.

In terms of biological role, surface antigen mediating adhesion and aggregation in S.cerevisiae. The sequence is that of Adherence factor (ADF1) from Candida albicans (strain SC5314 / ATCC MYA-2876) (Yeast).